A 201-amino-acid chain; its full sequence is Probable nicotinate-nucleotide adenylyltransferase (201 aa).

This sequence belongs to the NadD family.

The catalysed reaction is nicotinate beta-D-ribonucleotide + ATP + H(+) = deamido-NAD(+) + diphosphate. It participates in cofactor biosynthesis; NAD(+) biosynthesis; deamido-NAD(+) from nicotinate D-ribonucleotide: step 1/1. Functionally, catalyzes the reversible adenylation of nicotinate mononucleotide (NaMN) to nicotinic acid adenine dinucleotide (NaAD). The polypeptide is Probable nicotinate-nucleotide adenylyltransferase (Clostridium botulinum (strain Okra / Type B1)).